The sequence spans 286 residues: Rhomboid-type serine protease 2 (286 aa).

The next 6 helical transmembrane spans lie at 18–38 (ITQYPALTVGLSVFTFLLLVI), 66–86 (SFYLLFHRGFTHWLLNVVGLF), 99–119 (VFTGVTLNVLAVTAGLQFCIV), 122–142 (LLYPNTQVIGLSGVVFSFMSF), 164–183 (VSIPTLYSPFIFLIVCMVLI), and 188–210 (FWGHLAGISSGYLLALGYIKFLY). The active-site Nucleophile is the Ser133. Residue His191 is part of the active site.

The protein belongs to the peptidase S54 family.

The protein localises to the golgi apparatus membrane. It is found in the golgi apparatus. The protein resides in the cis-Golgi network membrane. It carries out the reaction Cleaves type-1 transmembrane domains using a catalytic dyad composed of serine and histidine that are contributed by different transmembrane domains.. Its function is as follows. Probable rhomboid-type serine protease that catalyzes intramembrane proteolysis. In Debaryomyces hansenii (strain ATCC 36239 / CBS 767 / BCRC 21394 / JCM 1990 / NBRC 0083 / IGC 2968) (Yeast), this protein is Rhomboid-type serine protease 2 (RBD2).